The following is a 440-amino-acid chain: N-succinylarginine dihydrolase (440 aa).

Substrate contacts are provided by residues 17–26, Asn-108, and 135–136; these read GGLSPGNLAS and HR. The interval 17-37 is disordered; that stretch reads GGLSPGNLASQSHVGEPSHPR. Glu-172 is a catalytic residue. Position 210 (Arg-210) interacts with substrate. The active site involves His-246. The substrate site is built by Asp-248 and Asn-358. The Nucleophile role is filled by Cys-364.

It belongs to the succinylarginine dihydrolase family. As to quaternary structure, homodimer.

The catalysed reaction is N(2)-succinyl-L-arginine + 2 H2O + 2 H(+) = N(2)-succinyl-L-ornithine + 2 NH4(+) + CO2. It functions in the pathway amino-acid degradation; L-arginine degradation via AST pathway; L-glutamate and succinate from L-arginine: step 2/5. Functionally, catalyzes the hydrolysis of N(2)-succinylarginine into N(2)-succinylornithine, ammonia and CO(2). This Myxococcus xanthus (strain DK1622) protein is N-succinylarginine dihydrolase.